The sequence spans 294 residues: Metallophosphoesterase MPPED2 (294 aa).

Residues D65, H67, D86, N117, and H213 each contribute to the Mn(2+) site. Residue 117-118 participates in GMP binding; sequence NH. Residues 225–226 and 252–255 contribute to the GMP site; these read KE and GIHE. H254 lines the Mn(2+) pocket.

It belongs to the UPF0046 family. In terms of assembly, homodimer. Requires Mn(2+) as cofactor. It depends on Co(2+) as a cofactor.

With respect to regulation, inhibited by nmolar levels of AMP and GMP. Its function is as follows. Displays low metallophosphoesterase activity (in vitro). May play a role in the development of the nervous system. In Mus musculus (Mouse), this protein is Metallophosphoesterase MPPED2 (Mpped2).